The following is a 454-amino-acid chain: tRNA-2-methylthio-N(6)-dimethylallyladenosine synthase (454 aa).

In terms of domain architecture, MTTase N-terminal spans 6-122 (RRYHITTFGC…LQDLLQEVLA (117 aa)). Cys-15, Cys-51, Cys-85, Cys-157, Cys-161, and Cys-164 together coordinate [4Fe-4S] cluster. A Radical SAM core domain is found at 143-380 (RESTVTAWVN…NHLVAIKAAE (238 aa)). In terms of domain architecture, TRAM spans 383–447 (QRYLGRIEEV…AFSLTGEPVK (65 aa)).

This sequence belongs to the methylthiotransferase family. MiaB subfamily. In terms of assembly, monomer. [4Fe-4S] cluster is required as a cofactor.

The protein localises to the cytoplasm. It catalyses the reaction N(6)-dimethylallyladenosine(37) in tRNA + (sulfur carrier)-SH + AH2 + 2 S-adenosyl-L-methionine = 2-methylsulfanyl-N(6)-dimethylallyladenosine(37) in tRNA + (sulfur carrier)-H + 5'-deoxyadenosine + L-methionine + A + S-adenosyl-L-homocysteine + 2 H(+). Catalyzes the methylthiolation of N6-(dimethylallyl)adenosine (i(6)A), leading to the formation of 2-methylthio-N6-(dimethylallyl)adenosine (ms(2)i(6)A) at position 37 in tRNAs that read codons beginning with uridine. This Gloeothece citriformis (strain PCC 7424) (Cyanothece sp. (strain PCC 7424)) protein is tRNA-2-methylthio-N(6)-dimethylallyladenosine synthase.